The chain runs to 187 residues: Capsid protein (187 aa).

The tract at residues arginine 150–cysteine 187 is disordered. The segment covering arginine 158–serine 180 has biased composition (basic residues). A phosphoserine; by host mark is found at serine 159, serine 166, and serine 174. A 1; half-length repeat occupies serine 159–proline 165. Residues serine 159–glutamine 181 form a 3 X 8 AA repeats of S-P-R-R-R-[PR]-S-Q region. The Bipartite nuclear localization signal signature appears at arginine 162–arginine 179. 2 tandem repeats follow at residues serine 166–glutamine 173 and serine 174–glutamine 181. Positions glutamine 181 to cysteine 187 are RNA binding.

The protein belongs to the orthohepadnavirus core antigen family. In terms of assembly, homodimerizes, then multimerizes. Interacts with cytosol exposed regions of viral L glycoprotein present in the reticulum-to-Golgi compartment. Interacts with human FLNB. Phosphorylated form interacts with host importin alpha; this interaction depends on the exposure of the NLS, which itself depends upon genome maturation and/or phosphorylation of the capsid protein. Interacts with host NUP153. In terms of processing, phosphorylated by host SRPK1, SRPK2, and maybe protein kinase C or GAPDH. Phosphorylation is critical for pregenomic RNA packaging. Protein kinase C phosphorylation is stimulated by HBx protein and may play a role in transport of the viral genome to the nucleus at the late step during the viral replication cycle.

It is found in the virion. The protein resides in the host cytoplasm. Functionally, self assembles to form an icosahedral capsid. Most capsids appear to be large particles with an icosahedral symmetry of T=4 and consist of 240 copies of capsid protein, though a fraction forms smaller T=3 particles consisting of 180 capsid proteins. Entering capsids are transported along microtubules to the nucleus. Phosphorylation of the capsid is thought to induce exposure of nuclear localization signal in the C-terminal portion of the capsid protein that allows binding to the nuclear pore complex via the importin (karyopherin-) alpha and beta. Capsids are imported in intact form through the nuclear pore into the nuclear basket, where it probably binds NUP153. Only capsids that contain the mature viral genome can release the viral DNA and capsid protein into the nucleoplasm. Immature capsids get stuck in the basket. Capsids encapsulate the pre-genomic RNA and the P protein. Pre-genomic RNA is reverse-transcribed into DNA while the capsid is still in the cytoplasm. The capsid can then either be directed to the nucleus, providing more genomes for transcription, or bud through the endoplasmic reticulum to provide new virions. The polypeptide is Capsid protein (Marmota monax (Woodchuck)).